Here is a 174-residue protein sequence, read N- to C-terminus: Gamma-crystallin C (174 aa).

2 consecutive Beta/gamma crystallin 'Greek key' domains span residues 2 to 40 and 41 to 83; these read GKIT…RVDS and GCWM…RLIP. Cysteine 23 is subject to S-methylcysteine. The interval 84-87 is connecting peptide; the sequence is HAGS. Beta/gamma crystallin 'Greek key' domains are found at residues 88-128 and 129-171; these read HRMR…QVLE and GCWV…RRVV.

Belongs to the beta/gamma-crystallin family.

Its function is as follows. Crystallins are the dominant structural components of the vertebrate eye lens. In Mus musculus (Mouse), this protein is Gamma-crystallin C (Crygc).